A 291-amino-acid chain; its full sequence is MEMO1 family protein TK1477 (291 aa).

The protein belongs to the MEMO1 family.

The chain is MEMO1 family protein TK1477 from Thermococcus kodakarensis (strain ATCC BAA-918 / JCM 12380 / KOD1) (Pyrococcus kodakaraensis (strain KOD1)).